Here is a 285-residue protein sequence, read N- to C-terminus: Foldase protein PrsA 2 (285 aa).

Positions 1-20 are cleaved as a signal peptide; that stretch reads MRGKHIFIITALISILMLSA. Residue Cys-21 is the site of N-palmitoyl cysteine attachment. Cys-21 carries S-diacylglycerol cysteine lipidation. The PpiC domain maps to 134–224; that stretch reads KPEIKASHIL…NGYHVIKLTD (91 aa).

Belongs to the PrsA family.

It localises to the cell membrane. It carries out the reaction [protein]-peptidylproline (omega=180) = [protein]-peptidylproline (omega=0). Functionally, plays a major role in protein secretion by helping the post-translocational extracellular folding of several secreted proteins. The sequence is that of Foldase protein PrsA 2 (prsA2) from Bacillus cereus (strain ATCC 14579 / DSM 31 / CCUG 7414 / JCM 2152 / NBRC 15305 / NCIMB 9373 / NCTC 2599 / NRRL B-3711).